We begin with the raw amino-acid sequence, 109 residues long: Tyrosine-protein phosphatase 16 (109 aa).

In terms of domain architecture, Tyrosine-protein phosphatase spans 1–109 (WRMVTEHTST…RIKTQKPIVV (109 aa)). Asp-81 is a binding site for substrate.

The protein belongs to the protein-tyrosine phosphatase family.

It catalyses the reaction O-phospho-L-tyrosyl-[protein] + H2O = L-tyrosyl-[protein] + phosphate. This chain is Tyrosine-protein phosphatase 16 (STY-16), found in Styela plicata (Wrinkled sea squirt).